The following is a 231-amino-acid chain: 7-cyano-7-deazaguanine synthase (231 aa).

17–27 (FSGGMDSFTLL) is a binding site for ATP. Zn(2+) is bound by residues Cys-193, Cys-201, Cys-204, and Cys-207.

This sequence belongs to the QueC family. The cofactor is Zn(2+).

It carries out the reaction 7-carboxy-7-deazaguanine + NH4(+) + ATP = 7-cyano-7-deazaguanine + ADP + phosphate + H2O + H(+). The protein operates within purine metabolism; 7-cyano-7-deazaguanine biosynthesis. In terms of biological role, catalyzes the ATP-dependent conversion of 7-carboxy-7-deazaguanine (CDG) to 7-cyano-7-deazaguanine (preQ(0)). The sequence is that of 7-cyano-7-deazaguanine synthase from Hahella chejuensis (strain KCTC 2396).